Consider the following 329-residue polypeptide: Protein Brevis radix-like 4 (329 aa).

The segment at 12–37 (SGTSRHHGQQRRGGSPPPRGRTTSVY) is disordered. A BRX 1 domain is found at 86-142 (REWVAQVEPGVQITFVSLAGGGGNDLKRIRFSREMYDKWQAQKWWGENNERIMELYN). Positions 151–263 (LPTPPRSDDG…TTSCSSRDEV (113 aa)) are disordered. 2 stretches are compositionally biased toward low complexity: residues 222–236 (SNPS…QQPQ) and 243–252 (AAASDAMDAA). The span at 253-263 (RTTSCSSRDEV) shows a compositional bias: polar residues. The 56-residue stretch at 274 to 329 (TEWVIQDEPGVYITVRELADGTRELRRVRFSRERFAELNAKLWWEENKERIQAQYL) folds into the BRX 2 domain.

The protein belongs to the BRX family.

Its subcellular location is the nucleus. The chain is Protein Brevis radix-like 4 (BRXL4) from Oryza sativa subsp. japonica (Rice).